We begin with the raw amino-acid sequence, 162 residues long: Protein-export protein SecB 2 (162 aa).

This sequence belongs to the SecB family. Homotetramer, a dimer of dimers. One homotetramer interacts with 1 SecA dimer.

The protein resides in the cytoplasm. One of the proteins required for the normal export of preproteins out of the cell cytoplasm. It is a molecular chaperone that binds to a subset of precursor proteins, maintaining them in a translocation-competent state. It also specifically binds to its receptor SecA. The sequence is that of Protein-export protein SecB 2 from Polaromonas naphthalenivorans (strain CJ2).